We begin with the raw amino-acid sequence, 356 residues long: NADH-quinone oxidoreductase subunit H (356 aa).

The next 9 membrane-spanning stretches (helical) occupy residues 17–37 (TGGI…LLLA), 51–71 (PNVV…KFVL), 83–103 (VVFI…WAVV), 116–136 (VGIL…IMGG), 162–182 (IGLI…STIV), 202–222 (LVLL…ALAE), 261–281 (IVLM…PGFP), 295–315 (LFLA…FAMA), and 334–354 (VFLP…VFGP).

It belongs to the complex I subunit 1 family. As to quaternary structure, NDH-1 is composed of 14 different subunits. Subunits NuoA, H, J, K, L, M, N constitute the membrane sector of the complex.

It localises to the cell inner membrane. It catalyses the reaction a quinone + NADH + 5 H(+)(in) = a quinol + NAD(+) + 4 H(+)(out). Its function is as follows. NDH-1 shuttles electrons from NADH, via FMN and iron-sulfur (Fe-S) centers, to quinones in the respiratory chain. The immediate electron acceptor for the enzyme in this species is believed to be ubiquinone. Couples the redox reaction to proton translocation (for every two electrons transferred, four hydrogen ions are translocated across the cytoplasmic membrane), and thus conserves the redox energy in a proton gradient. This subunit may bind ubiquinone. The polypeptide is NADH-quinone oxidoreductase subunit H (Caulobacter vibrioides (strain ATCC 19089 / CIP 103742 / CB 15) (Caulobacter crescentus)).